Here is a 180-residue protein sequence, read N- to C-terminus: Inner membrane-spanning protein YciB (180 aa).

5 consecutive transmembrane segments (helical) span residues 25-45, 49-69, 76-96, 118-138, and 150-170; these read QNAT…CYII, VSKL…ITLI, IKIK…MSGI, ITLS…NEIV, and FKVF…LPLL.

It belongs to the YciB family.

The protein localises to the cell inner membrane. In terms of biological role, plays a role in cell envelope biogenesis, maintenance of cell envelope integrity and membrane homeostasis. In Rickettsia akari (strain Hartford), this protein is Inner membrane-spanning protein YciB.